A 504-amino-acid polypeptide reads, in one-letter code: Endosomal/lysosomal proton channel TMEM175 (504 aa).

The tract at residues 1–27 is disordered; it reads MSQPRTPEQALDTPGDCPPGRRDEDAG. The Cytoplasmic segment spans residues 1–33; it reads MSQPRTPEQALDTPGDCPPGRRDEDAGEGIQCS. Phosphothreonine is present on threonine 6. The helical transmembrane segment at 34 to 56 threads the bilayer; it reads QRMLSFSDALLSIIATVMILPVT. A RxxxFSD motif 1 motif is present at residues 35–41; the sequence is RMLSFSD. At 57-77 the chain is on the lumenal side; that stretch reads HTEISPEQQFDRSVQRLLATR. A short helix H1-1 region spans residues 58–63; that stretch reads TEISPE. A short helix H2-1 region spans residues 65–71; sequence QFDRSVQ. Residues 78-100 traverse the membrane as a helical segment; the sequence is IAVYLMTFLIVTVAWAAHTRLFQ. Residues 101-106 lie on the Cytoplasmic side of the membrane; that stretch reads VVGKTD. The chain crosses the membrane as a helical span at residues 107 to 128; it reads DTLALLNLACMMTITFLPYTFS. Over 129-138 the chain is Lumenal; that stretch reads LMVTFPDVPL. The chain crosses the membrane as a helical span at residues 139–160; it reads GIFLFCVCVIAIGVVQALIVGY. The Cytoplasmic portion of the chain corresponds to 161 to 184; the sequence is AFHFPHLLSPQIQRSAHRALYRRH. The chain crosses the membrane as a helical span at residues 185-205; it reads VLGIVLQGPALCFAAAIFSLF. Topologically, residues 206–210 are lumenal; the sequence is FVPLS. The chain crosses the membrane as a helical span at residues 211-230; it reads YLLMVTVILLPYVSKVTGWC. Residues 231-257 are Cytoplasmic-facing; it reads RDRLLGHREPSAHPVEVFSFDLHEPLS. Residues 258–282 traverse the membrane as a helical segment; that stretch reads KERVEAFSDGVYAIVATLLILDICE. Positions 260 to 266 match the RxxxFSD motif 2 motif; that stretch reads RVEAFSD. Residues 283–309 are Lumenal-facing; it reads DNVPDPKDVKERFSGSLVAALSATGPR. Residues 288-296 form a short helix H1-2 region; sequence PKDVKERFS. The segment at 298–304 is short helix H2-2; it reads SLVAALS. Residues 310-332 form a helical membrane-spanning segment; the sequence is FLAYFGSFATVGLLWFAHHSLFL. Over 333-338 the chain is Cytoplasmic; sequence HVRKAT. A helical membrane pass occupies residues 339 to 360; the sequence is RAMGLLNTLSLAFVGGLPLAYQ. Residues 361 to 375 are Lumenal-facing; sequence QTSAFARQPRDELER. The helical transmembrane segment at 376–396 threads the bilayer; the sequence is VRVSCTIIFLASIFQLAMWTT. The Cytoplasmic segment spans residues 397 to 416; it reads ALLHQAETLQPSVWFGGREH. Residues 417-440 form a helical membrane-spanning segment; sequence VLMFAKLALYPCASLLAFASTCLL. Topologically, residues 441–442 are lumenal; the sequence is SR. A helical transmembrane segment spans residues 443–469; the sequence is FSVGIFHLMQIAVPCAFLLLRLLVGLA. Topologically, residues 470–504 are cytoplasmic; that stretch reads LATLRVLRGLARPEHPPPAPTGQDDPQSQLLPAPC. The tract at residues 483–504 is disordered; the sequence is EHPPPAPTGQDDPQSQLLPAPC. The span at 493–504 shows a compositional bias: polar residues; it reads DDPQSQLLPAPC.

Belongs to the TMEM175 family. As to quaternary structure, homodimer. Interacts with AKT (AKT1, AKT2 or AKT3); leading to formation of the lysoK(GF) complex, which activates the channel. Interacts with LAMP1; inhibiting the proton channel activity of TMEM175. Interacts with LAMP2; inhibiting the proton channel activity of TMEM175. Widely expressed.

Its subcellular location is the endosome membrane. The protein localises to the lysosome membrane. The enzyme catalyses H(+)(in) = H(+)(out). It carries out the reaction K(+)(in) = K(+)(out). With respect to regulation, active at low pH (under pH 4.6): proton channel activity is activated by luminal side protons. Polyunsaturated fatty acids, such as arachidonic acid, also activate the channel activity. Proton channel activity is directly inhibited by LAMP1 or LAMP2, facilitating lysosomal acidification. Channel activity is activated following interaction with AKT (AKT1, AKT2 or AKT3): interaction promotes activation from closed to an open state. Activation by AKT is independent of AKT serine/threonine-protein kinase activity. Its function is as follows. Proton-activated proton channel that catalyzes proton efflux from endosomes and lysosomes to maintain a steady-state pH. Activated at low pH (under pH 4.6) by luminal side protons: selectively mediates lysosomal proton release from lysosomes, eliciting a proton leak that balances V-ATPase activity to maintain pH homeostasis. Regulation of lumenal pH stability is required for autophagosome-lysosome fusion. Also acts as a potassium channel at higher pH, regulating potassium conductance in endosomes and lysosomes. Constitutes the pore-forming subunit of the lysoK(GF) complex, a complex activated by extracellular growth factors. The lysoK(GF) complex is composed of TMEM175 and AKT (AKT1, AKT2 or AKT3), a major target of growth factor receptors: in the complex, TMEM175 channel is opened by conformational changes by AKT, leading to its activation. The lysoK(GF) complex is required to protect neurons against stress-induced damage. The chain is Endosomal/lysosomal proton channel TMEM175 from Homo sapiens (Human).